The following is a 668-amino-acid chain: DNA damage-responsive serine/threonine-protein kinase RqkA (668 aa).

The Protein kinase domain occupies 13–272; that stretch reads YELLALLGEG…SGAALAHLWA (260 aa). ATP-binding positions include 19–27 and K42; that span reads LGEGGSAQV. D137 functions as the Proton acceptor in the catalytic mechanism.

It belongs to the protein kinase superfamily. Ser/Thr protein kinase family. Requires pyrroloquinoline quinone as cofactor. In terms of processing, autophosphorylated.

The enzyme catalyses L-seryl-[protein] + ATP = O-phospho-L-seryl-[protein] + ADP + H(+). It catalyses the reaction L-threonyl-[protein] + ATP = O-phospho-L-threonyl-[protein] + ADP + H(+). Its activity is regulated as follows. Autokinase activity is stimulated by DNA damage. Stimulated by PQQ and DNA ends in vitro. Plays an important role in radiation resistance and DNA double-strand break (DSB) repair. Involved in transcriptional regulation of genes important for bacterial stress response. Phosphorylates PprA in vitro. This is DNA damage-responsive serine/threonine-protein kinase RqkA (rqkA) from Deinococcus radiodurans (strain ATCC 13939 / DSM 20539 / JCM 16871 / CCUG 27074 / LMG 4051 / NBRC 15346 / NCIMB 9279 / VKM B-1422 / R1).